The following is a 179-amino-acid chain: Adenine phosphoribosyltransferase (179 aa).

Belongs to the purine/pyrimidine phosphoribosyltransferase family. Homodimer.

The protein resides in the cytoplasm. The enzyme catalyses AMP + diphosphate = 5-phospho-alpha-D-ribose 1-diphosphate + adenine. It participates in purine metabolism; AMP biosynthesis via salvage pathway; AMP from adenine: step 1/1. Its function is as follows. Catalyzes a salvage reaction resulting in the formation of AMP, that is energically less costly than de novo synthesis. This is Adenine phosphoribosyltransferase from Azorhizobium caulinodans (strain ATCC 43989 / DSM 5975 / JCM 20966 / LMG 6465 / NBRC 14845 / NCIMB 13405 / ORS 571).